Here is a 338-residue protein sequence, read N- to C-terminus: 4-hydroxy-3-methylbut-2-enyl diphosphate reductase (338 aa).

Cysteine 21 serves as a coordination point for [4Fe-4S] cluster. 2 residues coordinate (2E)-4-hydroxy-3-methylbut-2-enyl diphosphate: histidine 50 and histidine 83. Positions 50 and 83 each coordinate dimethylallyl diphosphate. 2 residues coordinate isopentenyl diphosphate: histidine 50 and histidine 83. Position 105 (cysteine 105) interacts with [4Fe-4S] cluster. Histidine 133 serves as a coordination point for (2E)-4-hydroxy-3-methylbut-2-enyl diphosphate. Histidine 133 serves as a coordination point for dimethylallyl diphosphate. Histidine 133 contributes to the isopentenyl diphosphate binding site. Catalysis depends on glutamate 135, which acts as the Proton donor. Threonine 173 contacts (2E)-4-hydroxy-3-methylbut-2-enyl diphosphate. Cysteine 203 serves as a coordination point for [4Fe-4S] cluster. (2E)-4-hydroxy-3-methylbut-2-enyl diphosphate is bound by residues serine 231, serine 232, asparagine 233, and serine 276. Dimethylallyl diphosphate contacts are provided by serine 231, serine 232, asparagine 233, and serine 276. Isopentenyl diphosphate contacts are provided by serine 231, serine 232, asparagine 233, and serine 276.

It belongs to the IspH family. The cofactor is [4Fe-4S] cluster.

It catalyses the reaction isopentenyl diphosphate + 2 oxidized [2Fe-2S]-[ferredoxin] + H2O = (2E)-4-hydroxy-3-methylbut-2-enyl diphosphate + 2 reduced [2Fe-2S]-[ferredoxin] + 2 H(+). The enzyme catalyses dimethylallyl diphosphate + 2 oxidized [2Fe-2S]-[ferredoxin] + H2O = (2E)-4-hydroxy-3-methylbut-2-enyl diphosphate + 2 reduced [2Fe-2S]-[ferredoxin] + 2 H(+). It functions in the pathway isoprenoid biosynthesis; dimethylallyl diphosphate biosynthesis; dimethylallyl diphosphate from (2E)-4-hydroxy-3-methylbutenyl diphosphate: step 1/1. The protein operates within isoprenoid biosynthesis; isopentenyl diphosphate biosynthesis via DXP pathway; isopentenyl diphosphate from 1-deoxy-D-xylulose 5-phosphate: step 6/6. Its function is as follows. Catalyzes the conversion of 1-hydroxy-2-methyl-2-(E)-butenyl 4-diphosphate (HMBPP) into a mixture of isopentenyl diphosphate (IPP) and dimethylallyl diphosphate (DMAPP). Acts in the terminal step of the DOXP/MEP pathway for isoprenoid precursor biosynthesis. In Streptomyces coelicolor (strain ATCC BAA-471 / A3(2) / M145), this protein is 4-hydroxy-3-methylbut-2-enyl diphosphate reductase.